Reading from the N-terminus, the 412-residue chain is L-threonine:uridine-5'-aldehyde transaldolase (412 aa).

Lysine 229 is subject to N6-(pyridoxal phosphate)lysine.

This sequence belongs to the SHMT family. Pyridoxal 5'-phosphate is required as a cofactor.

It catalyses the reaction uridine-5'-aldehyde + L-threonine = (5'S,6'S)-C-glycyluridine + acetaldehyde. It functions in the pathway antibiotic biosynthesis. Its function is as follows. Transaldolase involved in the biosynthesis of the capuramycin-type nucleoside antibiotic A-503083. Catalyzes the condensation of L-threonine and uridine-5'-aldehyde to form 5'-C-glycyluridine (GlyU). Forms (5'S,6'S)-GlyU. In Streptomyces sp, this protein is L-threonine:uridine-5'-aldehyde transaldolase.